We begin with the raw amino-acid sequence, 840 residues long: MNQEVKNKIFSILKITFATALFIFVAITLYRELSGINFKDTLVEFSKINRMSLVLLFIGGGASLVILSMYDVILSRALKMDISLGKVLRVSYIINALNAIVGFGGFIGAGVRAMVYKNYTHDKKKLVHFISLILISMLTGLSLLSLLIVFHVFDASLILDKITWVRWVLYVVSFFLPLFIIYSMVRPPDKNNRFVGLYCTLVSCVEWLAAAVVLYFCGVIVDAHVSFMSFIAIFIIAALSGLVSFIPGGFGAFDLVVLLGFKTLGVPEEKVLLMLLLYRFAYYFVPVIIALILSSFEFGTSAKKYIEGSKYFIPAKDVTSFLMSYQKDIIAKIPSLSLAILVFFTSMIFFVNNLTIVYDALYDGNHLTYYILLAIHTSACLLLLLNVVGIYKQSRRAIIFAMISILLITVATFFTYASYILITWLAIIFVLLIVAFRRARRLKRPVRMRNIVAMLLFSLFILYVNHIFIAGTLYALDIYTIEMHTSVLRYYFWLTILIIAIIIGMIAWLFDYQFSKVRISSKIEDCEEIINQYGGNYLSHLIYSGDKQFFTNENKTAFLMYRYKASSLVVLGDPLGDENAFDELLEAFYNYAEYLGYDVIFYQVTDQHMPLYHNFGNQFFKLGEEAIIDLTQFSTSGKKRRGFRATLNKFDELNISFEIIEPPFSTEFINELQHVSDLWLDNRQEMHFSVGQFNEEYLSKAPIGVMRNEENEVIAFCSLMPTYFNDAISVDLIRWLPELDLPLMDGLYLHMLLWSKEQGYTKFNMGMATLSNVGQLHYSYLRERLAGRVFEHFNGLYRFQGLRRYKSKYNPNWEPRFLVYRKDNSLWESLSKVMRVIRHK.

Topologically, residues 1-8 (MNQEVKNK) are cytoplasmic. A helical membrane pass occupies residues 9-29 (IFSILKITFATALFIFVAITL). Residues 30–52 (YRELSGINFKDTLVEFSKINRMS) lie on the Extracellular side of the membrane. Residues 53-73 (LVLLFIGGGASLVILSMYDVI) form a helical membrane-spanning segment. Residues 74–89 (LSRALKMDISLGKVLR) lie on the Cytoplasmic side of the membrane. Residues 90–110 (VSYIINALNAIVGFGGFIGAG) form a helical membrane-spanning segment. Topologically, residues 111–128 (VRAMVYKNYTHDKKKLVH) are extracellular. Residues 129-149 (FISLILISMLTGLSLLSLLIV) traverse the membrane as a helical segment. Topologically, residues 150 to 161 (FHVFDASLILDK) are cytoplasmic. Residues 162-182 (ITWVRWVLYVVSFFLPLFIIY) form a helical membrane-spanning segment. The Extracellular portion of the chain corresponds to 183–200 (SMVRPPDKNNRFVGLYCT). The helical transmembrane segment at 201 to 221 (LVSCVEWLAAAVVLYFCGVIV) threads the bilayer. Residues 222-229 (DAHVSFMS) are Cytoplasmic-facing. A helical transmembrane segment spans residues 230–250 (FIAIFIIAALSGLVSFIPGGF). Over 251 to 271 (GAFDLVVLLGFKTLGVPEEKV) the chain is Extracellular. A helical membrane pass occupies residues 272–292 (LLMLLLYRFAYYFVPVIIALI). The Cytoplasmic segment spans residues 293 to 337 (LSSFEFGTSAKKYIEGSKYFIPAKDVTSFLMSYQKDIIAKIPSLS). Residues 338–358 (LAILVFFTSMIFFVNNLTIVY) form a helical membrane-spanning segment. Topologically, residues 359–369 (DALYDGNHLTY) are extracellular. The helical transmembrane segment at 370–390 (YILLAIHTSACLLLLLNVVGI) threads the bilayer. Over 391–394 (YKQS) the chain is Cytoplasmic. A run of 2 helical transmembrane segments spans residues 395–415 (RRAI…TFFT) and 416–436 (YASY…IVAF). The Cytoplasmic portion of the chain corresponds to 437–450 (RRARRLKRPVRMRN). The helical transmembrane segment at 451-471 (IVAMLLFSLFILYVNHIFIAG) threads the bilayer. Over 472-489 (TLYALDIYTIEMHTSVLR) the chain is Extracellular. Residues 490–510 (YYFWLTILIIAIIIGMIAWLF) traverse the membrane as a helical segment. The Cytoplasmic portion of the chain corresponds to 511–840 (DYQFSKVRIS…SKVMRVIRHK (330 aa)).

The protein belongs to the LPG synthase family.

The protein resides in the cell membrane. It carries out the reaction L-lysyl-tRNA(Lys) + a 1,2-diacyl-sn-glycero-3-phospho-(1'-sn-glycerol) = a 1,2-diacyl-sn-glycero-3-phospho-1'-(3'-O-L-lysyl)-sn-glycerol + tRNA(Lys). Catalyzes the transfer of a lysyl group from L-lysyl-tRNA(Lys) to membrane-bound phosphatidylglycerol (PG), which produces lysylphosphatidylglycerol (LPG), a major component of the bacterial membrane with a positive net charge. LPG synthesis contributes to bacterial virulence as it is involved in the resistance mechanism against cationic antimicrobial peptides (CAMP) produces by the host's immune system (defensins, cathelicidins) and by the competing microorganisms (bacteriocins). In fact, the modification of anionic phosphatidylglycerol with positively charged L-lysine results in repulsion of the peptides. The polypeptide is Phosphatidylglycerol lysyltransferase (mprF) (Staphylococcus aureus (strain Mu50 / ATCC 700699)).